We begin with the raw amino-acid sequence, 586 residues long: uncharacterized protein (586 aa).

Coiled coils occupy residues 183–293 (THTE…ELEN) and 331–400 (FKDK…DKKN).

This is an uncharacterized protein from Bacillus subtilis (strain 168).